The chain runs to 1951 residues: [F-actin]-monooxygenase MICAL2 (1951 aa).

The interval 2–494 (GENEDEKQAQ…KHLYITKEMD (493 aa)) is monooxygenase domain. Residues Cys-97, 116–118 (EKR), 123–125 (RNN), Phe-183, Tyr-298, and Asp-398 each bind FAD. A Calponin-homology (CH) domain is found at 516–619 (DIRPNKLLTW…MVMYLSKFYE (104 aa)). Ser-631 carries the phosphoserine modification. Positions 660-681 (RKRTPRVDTQTEENDMNKRRRQ) match the Nuclear localization signal motif. 2 disordered regions span residues 663–712 (TPRV…SQNK) and 891–921 (KRVP…AADS). A compositionally biased stretch (low complexity) spans 691 to 700 (SFSSRSLGSS). Residues 896 to 909 (AHPPSPPSCLPSPH) are compositionally biased toward pro residues. A compositionally biased stretch (low complexity) spans 910 to 921 (PAAASSPPAADS). The region spanning 991–1053 (DTCYFCKKRV…KPHFVHCKTS (63 aa)) is the LIM zinc-binding domain. The Zn(2+) site is built by Cys-993, Cys-996, His-1014, Cys-1017, Cys-1020, Cys-1023, Cys-1043, and His-1046. Thr-1052 carries the phosphoserine modification. Disordered stretches follow at residues 1054 to 1141 (SKQR…RISP), 1158 to 1314 (TSED…VSPT), 1348 to 1368 (VEPG…EGCQ), 1383 to 1427 (ILGK…RKLG), 1451 to 1476 (HKTG…TCSS), 1489 to 1580 (QKKA…AKKA), 1594 to 1624 (AQAS…STTP), 1678 to 1697 (GDFF…VPSL), 1706 to 1731 (STSM…GEGG), and 1747 to 1766 (PVTE…EADS). Over residues 1061 to 1070 (AELNQQREEE) the composition is skewed to basic and acidic residues. Composition is skewed to polar residues over residues 1129-1138 (PRPSEWTSVR), 1228-1239 (HSLQSPTPSKYQ), and 1246-1256 (QSNSTPMNQRA). A compositionally biased stretch (pro residues) spans 1257 to 1268 (PSPPKEPPPPPS). Residues 1269-1285 (LSSSSSLPSSFSSASVP) show a composition bias toward low complexity. Residues 1291–1306 (DSSSPQVTYNLHSPQI) show a composition bias toward polar residues. The segment at 1314–1353 (TPIYLRRARAQGIVKEIPLYLPHSPMLESTEDCLVEPGRE) is interaction with MAPK1. Positions 1350-1359 (PGRESLRSPE) are enriched in basic and acidic residues. The segment covering 1532-1545 (EAGKKTSPKPESKT) has biased composition (basic and acidic residues). Low complexity predominate over residues 1599 to 1616 (LSLPNSILRSRSLPSRPS). Residues 1678–1688 (GDFFNSPKEEG) are compositionally biased toward basic and acidic residues. Ser-1683 is subject to Phosphoserine. Polar residues predominate over residues 1706-1720 (STSMGQVAHPSSTGQ). Residues 1749–1759 (TEATSSPTSSS) show a composition bias toward low complexity. Positions 1789 to 1939 (KQEELKRLHK…ERTQDQHFEN (151 aa)) constitute a bMERB domain.

It belongs to the Mical family. Interacts with PLXNA4. Interacts with RAB1B. Interacts with MAPK1/ERK2. Interacts with RAB1B, RAB35, RAB8A, RAB10, RAB13 and RAB15 (in their GTP-bound forms); binding to RAB1B and RAB35 is of low affinity compared to other Rab proteins; binding to RAB1B and RAB35 is of low affinity compared to other Rab proteins; at least in case of RAB8A may bind 2 molecules of RAB8A simultaneously through a high and a low affinity binding site, respectively. Requires FAD as cofactor. In terms of tissue distribution, expressed only in testis (at protein level).

Its subcellular location is the cytoplasm. It localises to the nucleus. The enzyme catalyses L-methionyl-[F-actin] + NADPH + O2 + H(+) = L-methionyl-(R)-S-oxide-[F-actin] + NADP(+) + H2O. In terms of biological role, methionine monooxygenase that promotes depolymerization of F-actin by mediating oxidation of residues 'Met-44' and 'Met-47' on actin to form methionine-sulfoxide, resulting in actin filament disassembly and preventing repolymerization. Regulates the disassembly of branched actin networks also by oxidizing ARP3B-containing ARP2/3 complexes leading to ARP3B dissociation from the network. Acts as a key regulator of the SRF signaling pathway elicited by nerve growth factor and serum: mediates oxidation and subsequent depolymerization of nuclear actin, leading to increase MKL1/MRTF-A presence in the nucleus and promote SRF:MKL1/MRTF-A-dependent gene transcription. Does not activate SRF:MKL1/MRTF-A through RhoA. This is [F-actin]-monooxygenase MICAL2 from Mus musculus (Mouse).